The following is a 122-amino-acid chain: uncharacterized protein (122 aa).

The protein localises to the mitochondrion. This is an uncharacterized protein from Claviceps purpurea (Ergot fungus).